A 647-amino-acid polypeptide reads, in one-letter code: Putative pre-mRNA-splicing factor ATP-dependent RNA helicase C20H4.09 (647 aa).

One can recognise a Helicase ATP-binding domain in the interval 35 to 199 (LYAVEQNQIT…FGQDKVCTMS (165 aa)). Position 48-55 (48-55 (GHTGCGKT)) interacts with ATP. Residues 146-149 (DEVH) carry the DEAH box motif. The Helicase C-terminal domain occupies 219–398 (YVDSAIETVI…PLVLFLKGLG (180 aa)).

This sequence belongs to the DEAD box helicase family. DEAH subfamily.

Its subcellular location is the nucleus. It carries out the reaction ATP + H2O = ADP + phosphate + H(+). Functionally, pre-mRNA processing factor involved in disassembly of spliceosomes after the release of mature mRNA. The protein is Putative pre-mRNA-splicing factor ATP-dependent RNA helicase C20H4.09 of Schizosaccharomyces pombe (strain 972 / ATCC 24843) (Fission yeast).